We begin with the raw amino-acid sequence, 288 residues long: Pantothenate synthetase (288 aa).

Met30–His37 provides a ligand contact to ATP. The active-site Proton donor is the His37. Gln61 is a binding site for (R)-pantoate. Position 61 (Gln61) interacts with beta-alanine. Gly149–Asp152 serves as a coordination point for ATP. Residue Gln155 coordinates (R)-pantoate. Residues Ile178 and Leu186–Arg189 each bind ATP.

This sequence belongs to the pantothenate synthetase family. In terms of assembly, homodimer.

Its subcellular location is the cytoplasm. It carries out the reaction (R)-pantoate + beta-alanine + ATP = (R)-pantothenate + AMP + diphosphate + H(+). It participates in cofactor biosynthesis; (R)-pantothenate biosynthesis; (R)-pantothenate from (R)-pantoate and beta-alanine: step 1/1. Catalyzes the condensation of pantoate with beta-alanine in an ATP-dependent reaction via a pantoyl-adenylate intermediate. The protein is Pantothenate synthetase of Colwellia psychrerythraea (strain 34H / ATCC BAA-681) (Vibrio psychroerythus).